The primary structure comprises 566 residues: APC membrane recruitment protein 2 (566 aa).

Disordered stretches follow at residues 120-176, 192-237, 277-307, and 342-533; these read KKNG…PGLI, TQKP…SPCS, VTGC…GKKV, and MIPP…RTKI. 3 stretches are compositionally biased toward basic and acidic residues: residues 123–134, 155–168, and 192–204; these read GKSENVRGEQAE, SKKD…KEGA, and TQKP…KSTE. Basic and acidic residues-rich tracts occupy residues 364–377 and 389–411; these read REVK…DRNA and YRKE…RNSD. Residues 464-476 show a composition bias toward low complexity; it reads PPLSHSHSKPLSP. Composition is skewed to polar residues over residues 477–489 and 504–517; these read VTTS…ASSN and HTTN…SGSA.

It belongs to the Amer family.

The protein localises to the cell membrane. Negative regulator of the canonical Wnt signaling pathway involved in neuroectodermal patterning. Acts by specifically binding phosphatidylinositol 4,5-bisphosphate (PtdIns(4,5)P2), translocating to the cell membrane and interacting with key regulators of the canonical Wnt signaling pathway, such as components of the beta-catenin destruction complex. The chain is APC membrane recruitment protein 2 (amer2) from Xenopus tropicalis (Western clawed frog).